Consider the following 314-residue polypeptide: 2,3-dihydroxyphenylpropionate/2,3-dihydroxicinnamic acid 1,2-dioxygenase (314 aa).

The Proton donor role is filled by His115. His179 serves as the catalytic Proton acceptor.

The protein belongs to the LigB/MhpB extradiol dioxygenase family. In terms of assembly, homotetramer. Fe(2+) serves as cofactor.

The catalysed reaction is 3-(2,3-dihydroxyphenyl)propanoate + O2 = (2Z,4E)-2-hydroxy-6-oxonona-2,4-dienedioate + H(+). The enzyme catalyses (2E)-3-(2,3-dihydroxyphenyl)prop-2-enoate + O2 = (2Z,4E,7E)-2-hydroxy-6-oxonona-2,4,7-trienedioate + H(+). It functions in the pathway aromatic compound metabolism; 3-phenylpropanoate degradation. Its function is as follows. Catalyzes the non-heme iron(II)-dependent oxidative cleavage of 2,3-dihydroxyphenylpropionic acid and 2,3-dihydroxicinnamic acid into 2-hydroxy-6-ketononadienedioate and 2-hydroxy-6-ketononatrienedioate, respectively. In Cupriavidus pinatubonensis (strain JMP 134 / LMG 1197) (Cupriavidus necator (strain JMP 134)), this protein is 2,3-dihydroxyphenylpropionate/2,3-dihydroxicinnamic acid 1,2-dioxygenase.